A 91-amino-acid polypeptide reads, in one-letter code: uncharacterized protein (91 aa).

The N-terminal stretch at 1–18 (MKVNLILFSLFLLVSIMA) is a signal peptide. A lipid anchor (N-palmitoyl cysteine) is attached at Cys-19. Cys-19 carries the S-diacylglycerol cysteine lipid modification.

The protein resides in the cell membrane. This is an uncharacterized protein from Escherichia coli (strain K12).